The following is a 132-amino-acid chain: Ribosome-binding factor A (132 aa).

This sequence belongs to the RbfA family. As to quaternary structure, monomer. Binds 30S ribosomal subunits, but not 50S ribosomal subunits or 70S ribosomes.

It is found in the cytoplasm. In terms of biological role, one of several proteins that assist in the late maturation steps of the functional core of the 30S ribosomal subunit. Associates with free 30S ribosomal subunits (but not with 30S subunits that are part of 70S ribosomes or polysomes). Required for efficient processing of 16S rRNA. May interact with the 5'-terminal helix region of 16S rRNA. The sequence is that of Ribosome-binding factor A from Xanthomonas campestris pv. campestris (strain 8004).